Consider the following 672-residue polypeptide: MEETCSESPKESNIISFIWHKLLKRVPPPIMICLFFLLLQIFVISVVSQCPPGLTPLFSNSNFNQPLTCTPQDACSCYSSSGSSRFGTICQYASTYNNYICCYSTNTQCGSNSSPQVSASGQVVTCSTNTQCASGYTCNNGACCPNTNSNTCSSNGNNGCLAGQTMVNGQCYNSVNIGSACQSTQQCLGGSQCQNNICQCYSGYVNVNQQCVISNGLNCQLGTVSYNSQCITLASPGQNCQTSSQCIDNSVCMNQMCTCNNNYRLVYGYCVPITSSICQQTQTLVNNQCVLLSIVGETCIANQQCVGGAMCNSGTCQCTNGATAMYGYCISSSSSSCNSNQVSINGMCYNTVQVGGSCSFSQQCLNNAVCTNNICVSTFCSVSCSTNQVCISNQCYNYVSIGSQCVGSQQCLSNSQCISSICQCPQGTQQSNGVCTGNNNNNNQCQPNQVLINNQCYNTVSIGFQCQFPQQCLGNSQCMNSMCQCPTGSTNVNGYCQGGSNGQCNSNQVLINNQCYNTVSIGFQCQFAQQCLGNSQCLNSICQCPSGSSNVNGYCQGGSNGQCNSNQVYYNNQCYNTVPIGSQCQITQQCLGNSQCMNSFCQCPSGTTNVNNFCTTSSSSSNLCSAGQTVQLDSSNQPINCLVSTCPNNSFCQYSSSGQRYVCCRSTSGKKK.

The helical transmembrane segment at 26–46 threads the bilayer; sequence VPPPIMICLFFLLLQIFVISV.

The protein localises to the membrane. This chain is Prion-like-(Q/N-rich) domain-bearing protein 25 (pqn-25), found in Caenorhabditis elegans.